The following is a 232-amino-acid chain: Orotidine 5'-phosphate decarboxylase (232 aa).

Substrate is bound by residues Asp11, Lys32, 59–68 (DLKLHDIPHT), Thr116, Arg178, Gln188, Gly208, and Arg209. Lys61 acts as the Proton donor in catalysis.

It belongs to the OMP decarboxylase family. Type 1 subfamily. Homodimer.

The enzyme catalyses orotidine 5'-phosphate + H(+) = UMP + CO2. Its pathway is pyrimidine metabolism; UMP biosynthesis via de novo pathway; UMP from orotate: step 2/2. Functionally, catalyzes the decarboxylation of orotidine 5'-monophosphate (OMP) to uridine 5'-monophosphate (UMP). The polypeptide is Orotidine 5'-phosphate decarboxylase (Synechococcus sp. (strain JA-3-3Ab) (Cyanobacteria bacterium Yellowstone A-Prime)).